Here is a 548-residue protein sequence, read N- to C-terminus: DNA-binding protein REPIN1 (548 aa).

The tract at residues 1–47 (MLERRCRGPTAMGPAHPWLFSGPSQESSQPNRGLRYQGKSVAQPGGP) is disordered. Residues 22–31 (GPSQESSQPN) show a composition bias toward polar residues. Serine 27 is modified (phosphoserine). The residue at position 39 (lysine 39) is an N6-acetyllysine. A C2H2-type 1; atypical zinc finger spans residues 53–75 (HRCAHCRKRFPGWVALWLHTRRC). 2 C2H2-type zinc fingers span residues 81–103 (LPCH…LQVH) and 112–134 (FICH…LRAH). The segment at 141 to 163 (ITCPECNKRFWRQKQLRAHLRRC) adopts a C2H2-type 4; atypical zinc-finger fold. C2H2-type zinc fingers lie at residues 173 to 195 (FICG…KRVH), 232 to 254 (FQCA…RRVH), 260 to 282 (HQCP…RRIH), 288 to 310 (YPCT…SKIH), 356 to 378 (HSCT…QRQH), 384 to 406 (FTCT…SRVH), 412 to 434 (FACE…RRDH), 440 to 462 (FVCP…RRIH), 468 to 490 (YVCP…RRIH), 496 to 518 (YACP…RKSH), and 524 to 546 (FCCA…QKKH). Lysine 272 is subject to N6-acetyllysine.

As to quaternary structure, homodimers and homomultimers. Found in a complex with RIP60 and RIP100. Expressed in the liver and in subcutaneous and visceral adipose tissue.

It localises to the nucleus. Its subcellular location is the cytoplasm. The protein resides in the cytosol. In terms of biological role, sequence-specific double-stranded DNA-binding protein. Binds ATT-rich and T-rich DNA sequences and facilitates DNA bending. May regulate the expression of genes involved in cellular fatty acid import, including SCARB1/CD36, and genes involved in lipid droplet formation. May regulate the expression of LCN2, and thereby influence iron metabolism and apoptosis-related pathways. May regulate the expression of genes involved in glucose transport. The chain is DNA-binding protein REPIN1 (Repin1) from Rattus norvegicus (Rat).